The chain runs to 118 residues: Large ribosomal subunit protein bL19 (118 aa).

The protein belongs to the bacterial ribosomal protein bL19 family.

This protein is located at the 30S-50S ribosomal subunit interface and may play a role in the structure and function of the aminoacyl-tRNA binding site. This chain is Large ribosomal subunit protein bL19, found in Lactiplantibacillus plantarum (strain ATCC BAA-793 / NCIMB 8826 / WCFS1) (Lactobacillus plantarum).